The sequence spans 421 residues: Autophagy-related protein 17 (421 aa).

The protein belongs to the ATG17 family. In terms of assembly, forms a complex with ATG13, ATG29 and CIS1/ATG31. The ATG17-ATG29-ATG31 complex interacts with the ATG1-ATG13 complex. Forms a complex with SNX4 and ATG20. Interacts with ATG11.

The protein resides in the cytoplasm. The protein localises to the preautophagosomal structure membrane. Autophagy-specific protein that functions with ATG13, ATG29, and CIS1/ATG31 in response to autophagy-inducing signals as a scaffold to recruit other ATG proteins to organize pre-autophagosomal structure (PAS) formation. Modulates the timing and magnitude of the autophagy response, such as the size of the sequestering vesicles, through interacting with and regulating ATG1 kinase activity. Plays particularly a role in pexophagy and nucleophagy. With ATG13, is required for ATG1 activation by autophosphorylation. Recruits ATG9 to the pre-autophagosomal structure. The sequence is that of Autophagy-related protein 17 from Kluyveromyces marxianus (strain DMKU3-1042 / BCC 29191 / NBRC 104275) (Yeast).